A 61-amino-acid polypeptide reads, in one-letter code: Large ribosomal subunit protein bL28 (61 aa).

It belongs to the bacterial ribosomal protein bL28 family.

This is Large ribosomal subunit protein bL28 (rpmB) from Geobacillus stearothermophilus (Bacillus stearothermophilus).